A 164-amino-acid polypeptide reads, in one-letter code: NAD(P)H-quinone oxidoreductase subunit I, chloroplastic (164 aa).

2 4Fe-4S ferredoxin-type domains span residues 55–84 (GRIH…VDWK) and 95–124 (LNYS…MTEE). 8 residues coordinate [4Fe-4S] cluster: C64, C67, C70, C74, C104, C107, C110, and C114.

It belongs to the complex I 23 kDa subunit family. As to quaternary structure, NDH is composed of at least 16 different subunits, 5 of which are encoded in the nucleus. It depends on [4Fe-4S] cluster as a cofactor.

The protein localises to the plastid. It is found in the chloroplast thylakoid membrane. It catalyses the reaction a plastoquinone + NADH + (n+1) H(+)(in) = a plastoquinol + NAD(+) + n H(+)(out). The catalysed reaction is a plastoquinone + NADPH + (n+1) H(+)(in) = a plastoquinol + NADP(+) + n H(+)(out). In terms of biological role, NDH shuttles electrons from NAD(P)H:plastoquinone, via FMN and iron-sulfur (Fe-S) centers, to quinones in the photosynthetic chain and possibly in a chloroplast respiratory chain. The immediate electron acceptor for the enzyme in this species is believed to be plastoquinone. Couples the redox reaction to proton translocation, and thus conserves the redox energy in a proton gradient. This chain is NAD(P)H-quinone oxidoreductase subunit I, chloroplastic, found in Daucus carota (Wild carrot).